The following is a 259-amino-acid chain: MSASPDDESTSSLDHQRVLLKLSGQALLGDREFGIDEAVLRTYANEVKTAVEAGAEVAVVIGGGNIFRGVEHAMEGMTRAHADYMGMLATMINGMALQDAFEQVDLVTRLQSSIKMEEIAEPFIRRRAIRHLEKGRVVIFGAGTGNPYFTTDTAAALRGLEIDADVILKGTRVDGIFTADPEEDASAERFKQIHGQEVIDRDLRVMDMTALTLCQESKMPIVVFNMGTSNNLRRLLEGETVGTHVHWDEAKASTERVPA.

21 to 24 (KLSG) contributes to the ATP binding site. Gly63 lines the UMP pocket. ATP-binding residues include Gly64 and Arg68. UMP-binding positions include Asp83 and 144-151 (TGNPYFTT). ATP-binding residues include Thr171, Phe177, and Asp180.

Belongs to the UMP kinase family. Homohexamer.

It is found in the cytoplasm. It catalyses the reaction UMP + ATP = UDP + ADP. Its pathway is pyrimidine metabolism; CTP biosynthesis via de novo pathway; UDP from UMP (UMPK route): step 1/1. Inhibited by UTP. Its function is as follows. Catalyzes the reversible phosphorylation of UMP to UDP. This is Uridylate kinase from Salinibacter ruber (strain DSM 13855 / M31).